The primary structure comprises 67 residues: Large ribosomal subunit protein eL24 (67 aa).

Positions 7, 10, 33, and 37 each coordinate Zn(2+). The segment at 7–37 (CDYCGTDIEPGTGTMFVHKDGATTHFCSSKC) adopts a C4-type zinc-finger fold. Positions 48–60 (RNLEWTDTARGEA) are enriched in basic and acidic residues. Positions 48 to 67 (RNLEWTDTARGEAGEAEDEA) are disordered.

The protein belongs to the eukaryotic ribosomal protein eL24 family. As to quaternary structure, part of the 50S ribosomal subunit. Forms a cluster with proteins L3 and L14. The cofactor is Zn(2+).

Its function is as follows. Binds to the 23S rRNA. This is Large ribosomal subunit protein eL24 (rpl24e) from Haloarcula marismortui (strain ATCC 43049 / DSM 3752 / JCM 8966 / VKM B-1809) (Halobacterium marismortui).